The sequence spans 403 residues: Histidine decarboxylase (403 aa).

Histidine 120 provides a ligand contact to substrate. The residue at position 233 (lysine 233) is an N6-(pyridoxal phosphate)lysine.

This sequence belongs to the group II decarboxylase family. In terms of assembly, homotetramer. Requires pyridoxal 5'-phosphate as cofactor.

The catalysed reaction is L-histidine + H(+) = histamine + CO2. This Pseudomonas entomophila (strain L48) protein is Histidine decarboxylase.